The primary structure comprises 354 residues: Holliday junction branch migration complex subunit RuvB (354 aa).

A disordered region spans residues 1–24 (MSIQTDDFAPVPPPKRVVSAAPTS). The segment at 5 to 195 (TDDFAPVPPP…FGIVARLEFY (191 aa)) is large ATPase domain (RuvB-L). ATP-binding positions include L34, R35, G76, K79, T80, T81, 142 to 144 (EDY), R185, Y195, and R232. Position 80 (T80) interacts with Mg(2+). The interval 196–266 (TPEELSRIVT…IAQRALAMLD (71 aa)) is small ATPAse domain (RuvB-S). Residues 269–354 (PQGFDVMDRK…RQHTDLFGPA (86 aa)) form a head domain (RuvB-H) region. DNA is bound by residues R324 and R329.

This sequence belongs to the RuvB family. In terms of assembly, homohexamer. Forms an RuvA(8)-RuvB(12)-Holliday junction (HJ) complex. HJ DNA is sandwiched between 2 RuvA tetramers; dsDNA enters through RuvA and exits via RuvB. An RuvB hexamer assembles on each DNA strand where it exits the tetramer. Each RuvB hexamer is contacted by two RuvA subunits (via domain III) on 2 adjacent RuvB subunits; this complex drives branch migration. In the full resolvosome a probable DNA-RuvA(4)-RuvB(12)-RuvC(2) complex forms which resolves the HJ.

It localises to the cytoplasm. The enzyme catalyses ATP + H2O = ADP + phosphate + H(+). Its function is as follows. The RuvA-RuvB-RuvC complex processes Holliday junction (HJ) DNA during genetic recombination and DNA repair, while the RuvA-RuvB complex plays an important role in the rescue of blocked DNA replication forks via replication fork reversal (RFR). RuvA specifically binds to HJ cruciform DNA, conferring on it an open structure. The RuvB hexamer acts as an ATP-dependent pump, pulling dsDNA into and through the RuvAB complex. RuvB forms 2 homohexamers on either side of HJ DNA bound by 1 or 2 RuvA tetramers; 4 subunits per hexamer contact DNA at a time. Coordinated motions by a converter formed by DNA-disengaged RuvB subunits stimulates ATP hydrolysis and nucleotide exchange. Immobilization of the converter enables RuvB to convert the ATP-contained energy into a lever motion, pulling 2 nucleotides of DNA out of the RuvA tetramer per ATP hydrolyzed, thus driving DNA branch migration. The RuvB motors rotate together with the DNA substrate, which together with the progressing nucleotide cycle form the mechanistic basis for DNA recombination by continuous HJ branch migration. Branch migration allows RuvC to scan DNA until it finds its consensus sequence, where it cleaves and resolves cruciform DNA. In Paracidovorax citrulli (strain AAC00-1) (Acidovorax citrulli), this protein is Holliday junction branch migration complex subunit RuvB.